The chain runs to 256 residues: MAENDSWDADDFEPEVSNQKGAVSGPPPAGRDRWEGEDEEEDVKDNWDDEEEAEAATKQEAQKTVEPKVSEKKKLLEKIREKEKLHKKRQEEVNQQEKEGTAPELSPEEQLAEKLRLKKLQEDSDLELAKEAFGDNVTVTGIDAMNPSSREDFTEFGKLLKEKITQYERSLFYPGFLEVLVREVCVSLEVDDLKKINNSLTVLCFEKQKQEKQQSKAKKKKKGVVPGGGLKANMKNDLEDYGGMDEGYGREYDDFM.

2 stretches are compositionally biased toward acidic residues: residues 1 to 14 and 35 to 54; these read MAEN…DFEP and EGED…EEAE. 2 disordered regions span residues 1–109 and 214–237; these read MAEN…SPEE and QSKA…MKND. Positions 55–101 are enriched in basic and acidic residues; the sequence is AATKQEAQKTVEPKVSEKKKLLEKIREKEKLHKKRQEEVNQQEKEGT. Residues 70-99 are a coiled coil; that stretch reads SEKKKLLEKIREKEKLHKKRQEEVNQQEKE.

It belongs to the eIF-3 subunit J family. In terms of assembly, component of the eukaryotic translation initiation factor 3 (eIF-3) complex, which is composed of 13 subunits: eif3a, eif3b, eif3c, eif3d, eif3e, eif3f, eif3g, eif3h, eif3i, eif3j, eif3k, eif3l and eif3m.

It is found in the cytoplasm. Its function is as follows. Component of the eukaryotic translation initiation factor 3 (eIF-3) complex, which is involved in protein synthesis of a specialized repertoire of mRNAs and, together with other initiation factors, stimulates binding of mRNA and methionyl-tRNAi to the 40S ribosome. The eIF-3 complex specifically targets and initiates translation of a subset of mRNAs involved in cell proliferation. The chain is Eukaryotic translation initiation factor 3 subunit J (eif3j) from Xenopus tropicalis (Western clawed frog).